The sequence spans 362 residues: MPTFPQSFPMNGGDGPHSYIHNSSYQKVAIDGAKEKTSEAILKNLDLELLNRNSDENILRIADFGCSIGPNTFEVVQNIIDTVKQKNLKENNAYIGAPLEFQVCFNDQPNNDFNTLFRTQPISSKQAYLSVGVPGSFHGRVLPKNSLHIGHITYALHWLSTVPQHVCDKKSPALNKSYIQCNNLVEEVTEAYRVQFKKDMGDFLGARAEELVSGGLMILSGQCLPDGVPKALTWQGVVIDMIGDCLMDMAKQGITTKEKIELFSLPIYIPHISEFKAEIERNENFSIETMEKISHPMDYKPLTNDFITSMFRAILNTIIEEHFGDGVVNELFDRFAKKLNKYPIDFKRCKKYVNYFIVLKRK.

S-adenosyl-L-homocysteine-binding residues include Tyr-19, Cys-66, Asn-71, Asp-107, Ser-136, and Phe-137. Positions 175, 261, and 263 each coordinate Mg(2+).

This sequence belongs to the methyltransferase superfamily. Type-7 methyltransferase family. As to quaternary structure, homodimer. Mg(2+) serves as cofactor.

The protein is Probable S-adenosylmethionine-dependent methyltransferase At5g37990 of Arabidopsis thaliana (Mouse-ear cress).